The chain runs to 1190 residues: Wings apart-like protein homolog (1190 aa).

2 disordered regions span residues 1-23 and 46-82; these read MTSR…FDEV and QKRP…DESL. The segment at 1-659 is mediates interaction with the cohesin complex; the sequence is MTSRFGKTYS…ENQEFTDDIE (659 aa). The segment covering 54–66 has biased composition (basic and acidic residues); the sequence is DIQEIPKKPKVEE. The short motif at 73 to 75 is the FGF motif 1 element; it reads FGF. S77 is subject to Phosphoserine. At K168 the chain carries N6-acetyllysine. Phosphoserine occurs at positions 221, 223, and 226. Residues 260 to 286 adopt a coiled-coil conformation; sequence LLEMKDDDFKNRLENLNEAIEEDIVQS. A phosphoserine mark is found at S347 and S380. Residues 429 to 431 carry the FGF motif 2 motif; the sequence is FGF. S443 is modified (phosphoserine). Positions 453-455 match the FGF motif 3 motif; sequence FGF. 2 positions are modified to phosphoserine: S459 and S461. The span at 459–469 shows a compositional bias: acidic residues; sequence SESEDDEDDDC. The segment at 459–553 is disordered; that stretch reads SESEDDEDDD…SGPKRSPTKA (95 aa). The span at 494–509 shows a compositional bias: polar residues; the sequence is SNDNSQDSQSGTNNAE. A compositionally biased stretch (basic and acidic residues) spans 531 to 540; sequence QGDKSKENTR. One can recognise a WAPL domain in the interval 626 to 1169; it reads RREDKELYTV…KKFLSFMNLT (544 aa). Residues 749–782 are a coiled coil; it reads ELEQDASSAKLLNEKDMNKIKEKIRRLCETVHNK. At S904 the chain carries Phosphoserine.

The protein belongs to the WAPL family. Interacts with the cohesin complex throughout the cell cycle; interacts with both chromatin-bound and soluble pools of the complex. Interacts with RAD21; the interaction is direct. Interacts with PDS5A; the interaction is direct, cohesin-dependent and competitive with CDCA5/SORORIN. Interacts (via FGF motifs) with PDS5B; the interaction is direct. Interacts with a SMC1 protein (SMC1A or SMC1B) and SMC3. In terms of assembly, (Microbial infection) Isoform 2 interacts with Epstein-Barr virus EBNA2. Deubiquitinated by USP37; leading to stabilization. Isoform 1 is highly expressed in uterine cervix tumor. Isoform 2 is widely expressed with a high level in skeletal muscle and heart.

The protein localises to the nucleus. Its subcellular location is the chromosome. It localises to the cytoplasm. Its function is as follows. Regulator of sister chromatid cohesion in mitosis which negatively regulates cohesin association with chromatin. Involved in both sister chromatid cohesion during interphase and sister-chromatid resolution during early stages of mitosis. Couples DNA replication to sister chromatid cohesion. Cohesion ensures that chromosome partitioning is accurate in both meiotic and mitotic cells and plays an important role in DNA repair. This Homo sapiens (Human) protein is Wings apart-like protein homolog.